The following is an 804-amino-acid chain: Enhancer of polycomb homolog 2 (804 aa).

Disordered stretches follow at residues 372–395 (QSSDDDEFPQVPSPLSELEEENDP), 484–508 (GFSSSSHIAQPPSSPSRTNASDRHC), 603–624 (QSQQSLQQSHPKAQGSGSSDCM), and 646–669 (PVRSEVNKDQNAGHSNLNGVVQPS). 2 stretches are compositionally biased toward polar residues: residues 611-624 (SHPKAQGSGSSDCM) and 654-669 (DQNAGHSNLNGVVQPS).

This sequence belongs to the enhancer of polycomb family.

It localises to the nucleus. In terms of biological role, may play a role in transcription or DNA repair. In Xenopus laevis (African clawed frog), this protein is Enhancer of polycomb homolog 2 (epc2).